We begin with the raw amino-acid sequence, 317 residues long: MPALGSQRRLLGSLNCTPPATLPFTLAPNRTGPQCLEVSIPDGLFLSLGLVSLVENVLVVAAIAKNRNLHSPMYYFICCLAVSDLLVSVSNVLETAVMLLLEAGVLATQAAVVQQLDNVIDVLICGSMVSSLCFLGAIAVDRYISIFYALRYHSVVTLPRAWRIIAAIWVASILTSLLFITYYNHKVILLCLVGLFIAMLALMAVLYVHMLARACQHARGIARLQKRQRPIHQGFGLKGAATLTILLGVFFLCWGPFFLHLSLIVLCPQHPTCGCIFKNFNLFLALIICNAIVDPLIYAFRSQELRKTLQEVLQCSW.

At 1–37 the chain is on the extracellular side; it reads MPALGSQRRLLGSLNCTPPATLPFTLAPNRTGPQCLE. A glycan (N-linked (GlcNAc...) asparagine) is linked at Asn29. Residues 38–63 form a helical membrane-spanning segment; sequence VSIPDGLFLSLGLVSLVENVLVVAAI. The Cytoplasmic portion of the chain corresponds to 64-72; the sequence is AKNRNLHSP. Residues 73-93 form a helical membrane-spanning segment; that stretch reads MYYFICCLAVSDLLVSVSNVL. Over 94–118 the chain is Extracellular; it reads ETAVMLLLEAGVLATQAAVVQQLDN. The chain crosses the membrane as a helical span at residues 119 to 140; that stretch reads VIDVLICGSMVSSLCFLGAIAV. Over 141–163 the chain is Cytoplasmic; it reads DRYISIFYALRYHSVVTLPRAWR. A helical membrane pass occupies residues 164-183; the sequence is IIAAIWVASILTSLLFITYY. Residues 184 to 191 lie on the Extracellular side of the membrane; that stretch reads NHKVILLC. Residues 192-211 form a helical membrane-spanning segment; sequence LVGLFIAMLALMAVLYVHML. Over 212 to 240 the chain is Cytoplasmic; that stretch reads ARACQHARGIARLQKRQRPIHQGFGLKGA. The helical transmembrane segment at 241–266 threads the bilayer; sequence ATLTILLGVFFLCWGPFFLHLSLIVL. The Extracellular segment spans residues 267 to 279; that stretch reads CPQHPTCGCIFKN. A helical membrane pass occupies residues 280–300; it reads FNLFLALIICNAIVDPLIYAF. Residues 301-317 lie on the Cytoplasmic side of the membrane; sequence RSQELRKTLQEVLQCSW. The S-palmitoyl cysteine moiety is linked to residue Cys315.

The protein belongs to the G-protein coupled receptor 1 family. In terms of assembly, interacts with MGRN1, but does not undergo MGRN1-mediated ubiquitination; this interaction competes with GNAS-binding and thus inhibits agonist-induced cAMP production. Interacts with OPN3; the interaction results in a decrease in MC1R-mediated cAMP signaling and ultimately a decrease in melanin production in melanocytes. In terms of tissue distribution, highly expressed in the testis.

The protein localises to the cell membrane. Its function is as follows. Receptor for MSH (alpha, beta) and ACTH. Does not seem to be active with gamma-MSH. The activity of this receptor is mediated by G proteins which activate adenylate cyclase. Mediates melanogenesis, the production of eumelanin (black/brown) and phaeomelanin (red/yellow), via regulation of cAMP signaling in melanocytes. This Bos taurus (Bovine) protein is Melanocyte-stimulating hormone receptor (MC1R).